We begin with the raw amino-acid sequence, 276 residues long: Glucosamine-6-phosphate deaminase 2 (276 aa).

The Proton acceptor; for enolization step role is filled by Asp72. A coiled-coil region spans residues Ile106–Gly130. Residue Asp141 is the For ring-opening step of the active site. The Proton acceptor; for ring-opening step role is filled by His143. Glu148 functions as the For ring-opening step in the catalytic mechanism. Thr161 is subject to Phosphothreonine.

Belongs to the glucosamine/galactosamine-6-phosphate isomerase family. Homohexamer.

The protein resides in the cytoplasm. The catalysed reaction is alpha-D-glucosamine 6-phosphate + H2O = beta-D-fructose 6-phosphate + NH4(+). It functions in the pathway nucleotide-sugar biosynthesis; UDP-N-acetyl-alpha-D-glucosamine biosynthesis; alpha-D-glucosamine 6-phosphate from D-fructose 6-phosphate: step 1/1. Its activity is regulated as follows. Allosterically activated by N-acetylglucosamine-6-phosphate (GlcNAc6P). Functionally, catalyzes the reversible conversion of alpha-D-glucosamine 6-phosphate (GlcN-6P) into beta-D-fructose 6-phosphate (Fru-6P) and ammonium ion, a regulatory reaction step in de novo uridine diphosphate-N-acetyl-alpha-D-glucosamine (UDP-GlcNAc) biosynthesis via hexosamine pathway. Deamination is coupled to aldo-keto isomerization mediating the metabolic flux from UDP-GlcNAc toward Fru-6P. At high ammonium level can drive amination and isomerization of Fru-6P toward hexosamines and UDP-GlcNAc synthesis. Has a role in fine tuning the metabolic fluctuations of cytosolic UDP-GlcNAc and their effects on hyaluronan synthesis that occur during tissue remodeling. The polypeptide is Glucosamine-6-phosphate deaminase 2 (Bos taurus (Bovine)).